The following is a 141-amino-acid chain: UPF0102 protein BRADO0179 (141 aa).

Residues 1–24 (MAETDRATDKPAGAPKPAKTASPE) form a disordered region. Over residues 10-19 (KPAGAPKPAK) the composition is skewed to low complexity.

It belongs to the UPF0102 family.

This chain is UPF0102 protein BRADO0179, found in Bradyrhizobium sp. (strain ORS 278).